Consider the following 227-residue polypeptide: 4'-phosphopantetheinyl transferase PptT (227 aa).

CoA contacts are provided by residues arginine 48, arginine 56, 75–78, 92–93, and aspartate 114; these read KGDK and TH. 3 residues coordinate Mg(2+): aspartate 114, alanine 115, and glutamate 116. CoA-binding residues include glutamate 157, lysine 161, and leucine 171.

It belongs to the P-Pant transferase superfamily. Mg(2+) serves as cofactor.

It catalyses the reaction apo-[ACP] + CoA = holo-[ACP] + adenosine 3',5'-bisphosphate + H(+). Its activity is regulated as follows. Inhibited by the amidino-urea compound 1-[(2,6-diethylphenyl)-3-N-ethylcarbamimodoyl]urea (compound 8918). It acts by binding to the phosphopantetheine pocket in the active site. Inhibition by compound 8918 kills M.tuberculosis. Functionally, transfers the 4'-phosphopantetheine moiety from coenzyme A to a Ser of acyl-carrier-protein. Involved in post-translational modification of various type-I polyketide synthases required for the formation of both mycolic acids and lipid virulence factors. Acts on Pks13, Mas, PpsA, PpsB, PpsC and PpsD. Also acts on AcpM, the meromycolate extension acyl carrier protein. In addition, is involved in the activation of the acyl carrier protein MbtL and the nonribosomal peptides synthases MbtB and MbtE, which are involved in the biosynthesis of the siderophore mycobactin. Its function is as follows. Required for the replication and survival of Mycobacterium during the acute and chronic phases of infection in mice. The protein is 4'-phosphopantetheinyl transferase PptT of Mycobacterium tuberculosis (strain ATCC 25618 / H37Rv).